Consider the following 423-residue polypeptide: MAIPWVEKYRPKTFEEIVNQEEAKYTLASWICAKFKAPREFCTRWAKKKDKEIVEAKAVLLAGPPGIGKTTIVHALAREIKYELIELNASDVRTGERIKQVVGRGLREASLFGYEGKLVLFDEVDGLHVKEDLGGLETIVEIIEIAKVPVIMTANNPYDPKFRPLRDIALVINLKRLSEDDVVEVLRRICANEGAKCEEEALRSIAKSSLGDLRAAINDLQMYLSSGKKILTVDDIKRVGERNPQLSMFEILDRVYRARWFDEARAISFNPSFDWEQYFLWALETIPTVYKDLELMAIAYDRLSKADMFLGRIKKTQEWELLPYALELSLGGISQVKNKPRLPPFIKYGFPQRLLLLAKSKEARRRREALVEYLAQNLHVSKSFVKSELIYVLSAIAKKDHSIIDRLSKALGINALDIKNLLL.

63–70 (GPPGIGKT) contacts ATP.

This sequence belongs to the activator 1 small subunits family. RfcL subfamily. In terms of assembly, heteromultimer composed of small subunits (RfcS) and large subunits (RfcL).

Part of the RFC clamp loader complex which loads the PCNA sliding clamp onto DNA. The protein is Replication factor C large subunit of Pyrobaculum islandicum (strain DSM 4184 / JCM 9189 / GEO3).